The following is a 335-amino-acid chain: Endo-beta-N-acetylglucosaminidase F2 (335 aa).

A signal peptide spans 1-45 (MKTANFSFALCLSVVIMLFIKCTRSEQDLSVTKDAIAQKSGVTVS). One can recognise a GH18 domain in the interval 61–321 (QISAGYYRTW…SSNDNTLRAP (261 aa)). Residues Ser-73, Ser-89, and Ser-143 are each glycosylated (O-linked (Man...) serine). The Proton donor role is filled by Glu-171.

This sequence belongs to the glycosyl hydrolase 18 family. As to quaternary structure, monomer. Carbohydrates at Ser-73, Ser-89 and Ser-143 consist of (2-OMe)Man1-4GlcNAcU1-4GlcU1-4Glc1-4(2-OMe)GlcU1-4[(2-OMe)Rham1-2]Man.

It localises to the secreted. It catalyses the reaction an N(4)-(oligosaccharide-(1-&gt;3)-[oligosaccharide-(1-&gt;6)]-beta-D-Man-(1-&gt;4)-beta-D-GlcNAc-(1-&gt;4)-alpha-D-GlcNAc)-L-asparaginyl-[protein] + H2O = an oligosaccharide-(1-&gt;3)-[oligosaccharide-(1-&gt;6)]-beta-D-Man-(1-&gt;4)-D-GlcNAc + N(4)-(N-acetyl-beta-D-glucosaminyl)-L-asparaginyl-[protein]. In terms of biological role, endohydrolysis of the di-N-acetylchitobiosyl unit in high-mannose glycopeptides and glycoproteins. Complex biantennary glycans are the preferred substrates. Tri- and tetraantennary glycans are not hydrolyzed, and high mannose glycans are very poor substrates. This is Endo-beta-N-acetylglucosaminidase F2 (endOF2) from Elizabethkingia meningoseptica (Chryseobacterium meningosepticum).